The chain runs to 248 residues: Pulmonary surfactant-associated protein A (248 aa).

The signal sequence occupies residues methionine 1 to cysteine 20. In terms of domain architecture, Collagen-like spans glycine 28–proline 100. 4-hydroxyproline is present on residues proline 30, proline 33, proline 36, proline 42, proline 54, proline 57, proline 63, proline 67, proline 70, and proline 76. Positions glycine 31 to phenylalanine 99 are disordered. A compositionally biased stretch (basic and acidic residues) spans proline 42–lysine 51. Positions proline 54 to glycine 65 are enriched in pro residues. Over residues leucine 69–proline 82 the composition is skewed to low complexity. Residues glutamate 84 to glutamate 93 are compositionally biased toward basic and acidic residues. Residues serine 133–phenylalanine 248 enclose the C-type lectin domain. Cystine bridges form between cysteine 155-cysteine 246 and cysteine 224-cysteine 238. N-linked (GlcNAc...) asparagine glycosylation occurs at asparagine 207. Residues glutamate 215, arginine 217, asparagine 234, and aspartate 235 each coordinate Ca(2+).

The protein belongs to the SFTPA family. As to quaternary structure, oligomeric complex of 6 set of homotrimers.

The protein localises to the secreted. It is found in the extracellular space. The protein resides in the extracellular matrix. Its subcellular location is the surface film. In terms of biological role, in presence of calcium ions, it binds to surfactant phospholipids and contributes to lower the surface tension at the air-liquid interface in the alveoli of the mammalian lung and is essential for normal respiration. Enhances the expression of MYO18A/SP-R210 on alveolar macrophages. In Rattus norvegicus (Rat), this protein is Pulmonary surfactant-associated protein A (Sftpa1).